Consider the following 325-residue polypeptide: uncharacterized protein (325 aa).

The interval 108–141 (PHRTQGISSTSSKSSKGGKKTPVRSTPKEIKKAT) is disordered.

This is an uncharacterized protein from Homo sapiens (Human).